The chain runs to 367 residues: Carbamoyl phosphate synthase small chain (367 aa).

The interval 1-182 is CPSase; it reads MKLENKKGYL…PIFHPNTGDM (182 aa). L-glutamine contacts are provided by Ser50, Gly230, and Gly232. Residues 182 to 367 form the Glutamine amidotransferase type-1 domain; that stretch reads MIVVVDCGIK…DKFRTMVTGK (186 aa). Cys258 (nucleophile) is an active-site residue. Residues Leu259, Gln262, Asn300, Gly302, and Tyr303 each coordinate L-glutamine. Active-site residues include His343 and Glu345.

It belongs to the CarA family. In terms of assembly, composed of two chains; the small (or glutamine) chain promotes the hydrolysis of glutamine to ammonia, which is used by the large (or ammonia) chain to synthesize carbamoyl phosphate. Tetramer of heterodimers (alpha,beta)4.

It carries out the reaction hydrogencarbonate + L-glutamine + 2 ATP + H2O = carbamoyl phosphate + L-glutamate + 2 ADP + phosphate + 2 H(+). It catalyses the reaction L-glutamine + H2O = L-glutamate + NH4(+). Its pathway is amino-acid biosynthesis; L-arginine biosynthesis; carbamoyl phosphate from bicarbonate: step 1/1. It functions in the pathway pyrimidine metabolism; UMP biosynthesis via de novo pathway; (S)-dihydroorotate from bicarbonate: step 1/3. Small subunit of the glutamine-dependent carbamoyl phosphate synthetase (CPSase). CPSase catalyzes the formation of carbamoyl phosphate from the ammonia moiety of glutamine, carbonate, and phosphate donated by ATP, constituting the first step of 2 biosynthetic pathways, one leading to arginine and/or urea and the other to pyrimidine nucleotides. The small subunit (glutamine amidotransferase) binds and cleaves glutamine to supply the large subunit with the substrate ammonia. The sequence is that of Carbamoyl phosphate synthase small chain from Saccharolobus solfataricus (strain ATCC 35092 / DSM 1617 / JCM 11322 / P2) (Sulfolobus solfataricus).